Consider the following 124-residue polypeptide: Large ribosomal subunit protein uL18 (124 aa).

Belongs to the universal ribosomal protein uL18 family. Part of the 50S ribosomal subunit; part of the 5S rRNA/L5/L18/L25 subcomplex. Contacts the 5S and 23S rRNAs.

Functionally, this is one of the proteins that bind and probably mediate the attachment of the 5S RNA into the large ribosomal subunit, where it forms part of the central protuberance. In Desulfosudis oleivorans (strain DSM 6200 / JCM 39069 / Hxd3) (Desulfococcus oleovorans), this protein is Large ribosomal subunit protein uL18.